A 90-amino-acid polypeptide reads, in one-letter code: MSSTSQKHRDFVAEPMGEKSVQCLAGIGEALGHRLEEKGFDKAYVVLGQFLVLKKDEELFKEWLKDICSANAKQSRDCYGCLKEWCDAFL.

The protein belongs to the BAF family. As to quaternary structure, homodimer. Interacts with nemp1a and nemp1b. Post-translationally, phosphorylated during S and M phases.

The protein localises to the nucleus. Its subcellular location is the chromosome. The protein resides in the nucleus envelope. It localises to the cytoplasm. In terms of biological role, non-specific DNA-binding protein that plays key roles in mitotic nuclear reassembly, chromatin organization, DNA damage response, gene expression and intrinsic immunity against foreign DNA. Contains two non-specific double-stranded DNA (dsDNA)-binding sites which promote DNA cross-bridging. Plays a key role in nuclear membrane reformation at the end of mitosis by driving formation of a single nucleus in a spindle-independent manner. Transiently cross-bridges anaphase chromosomes via its ability to bridge distant DNA sites, leading to the formation of a dense chromatin network at the chromosome ensemble surface that limits membranes to the surface. Also acts as a negative regulator of innate immune activation by restricting CGAS activity toward self-DNA upon acute loss of nuclear membrane integrity. Outcompetes CGAS for DNA-binding, thereby preventing CGAS activation and subsequent damaging autoinflammatory responses. Also involved in DNA damage response; acts by inhibiting the ADP-ribosyltransferase activity of PARP1. Involved in the recognition of exogenous dsDNA in the cytosol: associates with exogenous dsDNA immediately after its appearance in the cytosol at endosome breakdown and is required to avoid autophagy. This Xenopus laevis (African clawed frog) protein is Barrier-to-autointegration factor A (banf1-a).